We begin with the raw amino-acid sequence, 517 residues long: Beta-glucosidase 17 (517 aa).

The signal sequence occupies residues 1-23; it reads MAIKSIFIIIIISIITSISELYA. A beta-D-glucoside-binding positions include Gln-54, His-158, and 203–204; that span reads NE. The active-site Proton donor is Glu-204. The cysteines at positions 223 and 230 are disulfide-linked. The N-linked (GlcNAc...) asparagine glycan is linked to Asn-229. A beta-D-glucoside is bound at residue Tyr-346. Asn-361 and Asn-371 each carry an N-linked (GlcNAc...) asparagine glycan. A beta-D-glucoside is bound by residues Glu-417, Trp-466, 473–474, and Tyr-482; that span reads EW. Glu-417 functions as the Nucleophile in the catalytic mechanism. N-linked (GlcNAc...) asparagine glycosylation occurs at Asn-510.

It belongs to the glycosyl hydrolase 1 family.

The enzyme catalyses Hydrolysis of terminal, non-reducing beta-D-glucosyl residues with release of beta-D-glucose.. The chain is Beta-glucosidase 17 from Arabidopsis thaliana (Mouse-ear cress).